The chain runs to 119 residues: Immunoglobulin heavy variable 2-26 (119 aa).

An N-terminal signal peptide occupies residues 1–19 (MDTLCYTLLLLTTPSWVLS). Gln20 carries the pyrrolidone carboxylic acid modification. Positions 20–44 (QVTLKESGPVLVKPTETLTLTCTVS) are framework-1. The region spanning 20-119 (QVTLKESGPV…DTATYYCARI (100 aa)) is the Ig-like domain. Cys41 and Cys116 are oxidised to a cystine. Residues 45-54 (GFSLSNARMG) are complementarity-determining-1. Residues 55-71 (VSWIRQPPGKALEWLAH) form a framework-2 region. Residues 72–78 (IFSNDEK) are complementarity-determining-2. A framework-3 region spans residues 79–116 (SYSTSLKSRLTISKDTSKSQVVLTMTNMDPVDTATYYC). Residues 117–119 (ARI) form a complementarity-determining-3 region.

As to quaternary structure, immunoglobulins are composed of two identical heavy chains and two identical light chains; disulfide-linked.

Its subcellular location is the secreted. It is found in the cell membrane. Functionally, v region of the variable domain of immunoglobulin heavy chains that participates in the antigen recognition. Immunoglobulins, also known as antibodies, are membrane-bound or secreted glycoproteins produced by B lymphocytes. In the recognition phase of humoral immunity, the membrane-bound immunoglobulins serve as receptors which, upon binding of a specific antigen, trigger the clonal expansion and differentiation of B lymphocytes into immunoglobulins-secreting plasma cells. Secreted immunoglobulins mediate the effector phase of humoral immunity, which results in the elimination of bound antigens. The antigen binding site is formed by the variable domain of one heavy chain, together with that of its associated light chain. Thus, each immunoglobulin has two antigen binding sites with remarkable affinity for a particular antigen. The variable domains are assembled by a process called V-(D)-J rearrangement and can then be subjected to somatic hypermutations which, after exposure to antigen and selection, allow affinity maturation for a particular antigen. The sequence is that of Immunoglobulin heavy variable 2-26 from Homo sapiens (Human).